Here is a 494-residue protein sequence, read N- to C-terminus: ETS translocation variant 4 (494 aa).

Disordered stretches follow at residues E82 to Q113 and A139 to A201. Positions S100–Q113 are enriched in polar residues. The span at S176–S187 shows a compositional bias: low complexity. The segment covering Y188 to P197 has biased composition (polar residues). Positions L350 to V430 form a DNA-binding region, ETS.

It belongs to the ETS family. Post-translationally, phosphorylated. In terms of tissue distribution, in the embryo, expressed ubiquitously until the late blastula stage, in the marginal zone of gastrula stages, in the presumptive forebrain and hindbrain and in the trunk region of early somite stages. In later stages, also expressed in Rohon-Beard neurons, epiphysis, lateral line placodes, pectoral fin buds, developing lens and heart.

It localises to the nucleus. In terms of biological role, transcriptional activator that binds to the (5'-CCGGA[AT]-3') motif. May control the acquisition of specific cell fates at an early stage during development of the somites and nervous system. May mediate the cellular effects of the fibroblast growth factors on embryogenesis. This is ETS translocation variant 4 (etv4) from Danio rerio (Zebrafish).